Here is a 2542-residue protein sequence, read N- to C-terminus: Unconventional myosin-IXa (2542 aa).

In terms of domain architecture, Ras-associating spans 14 to 112 (NEHTLRIYPG…YRFLLREKNL (99 aa)). Residues 146 to 1017 (KDFDDLCSLP…ERQHLQDLLH (872 aa)) form the Myosin motor domain. Residues 175 to 195 (IYTYVGSILIAINPFKFLPIY) traverse the membrane as a helical segment. 239–246 (GESGSGKT) is an ATP binding site. Serine 755 carries the phosphoserine modification. Residues 908 to 919 (QAEPYFVKCIRS) form an actin-binding region. 5 IQ domains span residues 1021–1041 (LRRIVLLQRWFRVLLSRQQFL), 1043–1072 (LRQASIIIQRFWRNYLNQKQVRNAAVEKDA), 1075–1104 (MASAASLLQASWRAHLERQRYLELRAAAVI), 1116–1145 (RHKAATCIQSRWRGYRQRKKYKEQRNKIIL), and 1139–1168 (QRNKIILLQSIYRGFRARQRCNALKEEKLR). Residues 1022 to 1163 (RRIVLLQRWF…RARQRCNALK (142 aa)) are neck or regulatory domain. A tail region spans residues 1164 to 2505 (EEKLREAKLE…LKNVKNSPQK (1342 aa)). Basic and acidic residues predominate over residues 1221–1240 (RESSMDFSKESPDKQQERGR). The segment at 1221–1276 (RESSMDFSKESPDKQQERGRRQSGTDLQEDVIVRQRPKSLEDLHQKKVGRAKRESR) is disordered. Serine 1243 is subject to Phosphoserine. Threonine 1245 carries the phosphothreonine modification. Serine 1259 is modified (phosphoserine). Positions 1265 to 1292 (QKKVGRAKRESRRMRELEQAIFSLELLK) form a coiled coil. A compositionally biased stretch (basic residues) spans 1266-1276 (KKVGRAKRESR). Phosphoserine is present on residues serine 1300 and serine 1318. The segment at 1342-1401 (KSKPESLILDEGELKISSPNTFTNPKSQDNALSASSETSSTLAGKGASSDSEHLKNGTAK) is disordered. Residues 1358–1371 (SSPNTFTNPKSQDN) show a composition bias toward polar residues. Residues 1372–1384 (ALSASSETSSTLA) show a composition bias toward low complexity. The span at 1391 to 1401 (DSEHLKNGTAK) shows a compositional bias: basic and acidic residues. A coiled-coil region spans residues 1492-1539 (TVLKKLEKLNIEKEKRQKQLQQQNEKEMMEQIRQQTDILEKERKAFKT). 4 disordered regions span residues 1650–1675 (RSTERDHFKSTHFYSHRSDDPSREGS), 1693–1727 (SGNPQAHKQDESAWKPKLAGPGQQETSQRFSSVDE), 1767–1793 (GKQGEKKTTRVKPASQSEISSFFPGPD), and 1806–1841 (QYHPTPPLSPELPGSCRKEFKENKEPSPKAKRKRGV). Positions 1665 to 1675 (HRSDDPSREGS) are enriched in basic and acidic residues. A compositionally biased stretch (polar residues) spans 1715-1726 (QQETSQRFSSVD). Residues 1821–1833 (CRKEFKENKEPSP) are compositionally biased toward basic and acidic residues. Serine 1950 carries the post-translational modification Phosphoserine. 2 Phorbol-ester/DAG-type zinc fingers span residues 2001-2050 (GHIF…TAKC) and 2068-2119 (SRLT…DTDA). Positions 2065–2253 (VELSRLTSED…LIVVEQMNKY (189 aa)) constitute a Rho-GAP domain. Residues serine 2293 and serine 2296 each carry the phosphoserine modification. Residues 2324–2360 (TDQQQAAMQQEEKVLTEQIENLQKEKEELTFEMLVLE) adopt a coiled-coil conformation. The segment at 2361–2443 (PRASDDETLE…NTTSSHGTRK (83 aa)) is disordered. Over residues 2377 to 2386 (TADSSENLNM) the composition is skewed to polar residues. The span at 2420–2438 (SLDSVSSSVSSCLSNTTSS) shows a compositional bias: low complexity. Serine 2458 carries the post-translational modification Phosphoserine. Positions 2465 to 2530 (TEGPLGQAKS…TVDSDCSSTQ (66 aa)) are disordered.

It belongs to the TRAFAC class myosin-kinesin ATPase superfamily. Myosin family. Post-translationally, phosphorylated by ALPK1 following monosodium urate monohydrate (MSU)-induced inflammation. Expressed in the eye, lung, liver, brain, heart, kidney, skeletal muscle and spleen. No detection was found in liver. In the brain, expressed in the ependymal cells of the third ventricle and the aqueduct.

Its subcellular location is the membrane. It is found in the cytoplasm. The protein localises to the synapse. The protein resides in the cell projection. It localises to the growth cone. Functionally, myosins are actin-based motor molecules with ATPase activity. Unconventional myosins serve in intracellular movements. Regulates Rho by stimulating it's GTPase activity in neurons. Required for the regulation of neurite branching and motor neuron axon guidance. This chain is Unconventional myosin-IXa (Myo9a), found in Mus musculus (Mouse).